The chain runs to 446 residues: Homocitrate synthase, mitochondrial (446 aa).

Over residues 1–14 (MCATDNAPAANAAP) the composition is skewed to low complexity. The interval 1–36 (MCATDNAPAANAAPEKPSNVGVEVGHTGEQTNPYGA) is disordered. In terms of domain architecture, Pyruvate carboxyltransferase spans 48-307 (FQLIESTLRE…HKLRDLENLV (260 aa)). A 2-oxoglutarate-binding site is contributed by Arg56. Residue Glu57 coordinates Mg(2+). 2-oxoglutarate contacts are provided by His116, Arg176, and Thr210. Positions 237 and 239 each coordinate Mg(2+). The active-site Proton acceptor is His334. The tract at residues 422–446 (TPTVAATEGPAVEDEPAAKKAKTEE) is disordered. The span at 437 to 446 (PAAKKAKTEE) shows a compositional bias: basic and acidic residues.

The protein belongs to the alpha-IPM synthase/homocitrate synthase family. Homocitrate synthase LYS20/LYS21 subfamily. Requires Mg(2+) as cofactor. It depends on Mn(2+) as a cofactor.

It is found in the mitochondrion. It carries out the reaction acetyl-CoA + 2-oxoglutarate + H2O = (2R)-homocitrate + CoA + H(+). Its pathway is amino-acid biosynthesis; L-lysine biosynthesis via AAA pathway; L-alpha-aminoadipate from 2-oxoglutarate: step 1/5. In terms of biological role, catalyzes the aldol-type condensation of 2-oxoglutarate with acetyl-CoA to yield homocitrate. Carries out the first step of the alpha-aminoadipate (AAA) lysine biosynthesis pathway. This chain is Homocitrate synthase, mitochondrial (LYS1), found in Yarrowia lipolytica (strain CLIB 122 / E 150) (Yeast).